Consider the following 212-residue polypeptide: ER lumen protein-retaining receptor (212 aa).

Over 1 to 2 (MN) the chain is Lumenal. The helical transmembrane segment at 3-21 (IFRFAGDLSHVFAIIILLL) threads the bilayer. Residues 22–35 (KIWKTRSCAGISGK) are Cytoplasmic-facing. Residues 36–53 (SQILFAVVYLTRYLDLFT) form a helical membrane-spanning segment. Topologically, residues 54-61 (TYVSLYNS) are lumenal. A helical transmembrane segment spans residues 62 to 80 (VMKVLFLATSGATVYLMYV). The Cytoplasmic segment spans residues 81–96 (KFKATYDHNHDSFRIE). A helical membrane pass occupies residues 97 to 110 (FLLVPCALLSLVIN). The Lumenal portion of the chain corresponds to 111–117 (HEFTVME). Residues 118–137 (VLWTFSIYLESVAILPQLFL) traverse the membrane as a helical segment. Topologically, residues 138-149 (VSRTGEAESITS) are cytoplasmic. A helical transmembrane segment spans residues 150 to 168 (HYLFALGSYRALYLLNWVY). Residues 169-178 (RYMVESHYDL) lie on the Lumenal side of the membrane. The chain crosses the membrane as a helical span at residues 179–199 (IAIFAGVVQTVLYCDFFYLYI). The Cytoplasmic segment spans residues 200–212 (TKVLKGKKLQLPA).

It belongs to the ERD2 family.

It is found in the endoplasmic reticulum membrane. Functionally, required for the retention of luminal endoplasmic reticulum proteins. Determines the specificity of the luminal ER protein retention system. Also required for normal vesicular traffic through the Golgi. The protein is ER lumen protein-retaining receptor (KdelR) of Drosophila melanogaster (Fruit fly).